A 291-amino-acid chain; its full sequence is N-acetylmannosamine kinase (291 aa).

ATP contacts are provided by residues 5-12 (AIDIGGTK) and 132-139 (GVGGGVVS). Zn(2+)-binding residues include histidine 156, cysteine 166, cysteine 168, and cysteine 173.

This sequence belongs to the ROK (NagC/XylR) family. NanK subfamily. In terms of assembly, homodimer.

The enzyme catalyses an N-acyl-D-mannosamine + ATP = an N-acyl-D-mannosamine 6-phosphate + ADP + H(+). It functions in the pathway amino-sugar metabolism; N-acetylneuraminate degradation; D-fructose 6-phosphate from N-acetylneuraminate: step 2/5. In terms of biological role, catalyzes the phosphorylation of N-acetylmannosamine (ManNAc) to ManNAc-6-P. This chain is N-acetylmannosamine kinase (nanK1), found in Escherichia coli O6:H1 (strain CFT073 / ATCC 700928 / UPEC).